The following is a 193-amino-acid chain: Fibrillarin-like rRNA/tRNA 2'-O-methyltransferase (193 aa).

Residues 82 to 83 (TT), 100 to 101 (EF), 125 to 126 (DA), and 145 to 148 (DVAQ) each bind S-adenosyl-L-methionine.

The protein belongs to the methyltransferase superfamily. Fibrillarin family. As to quaternary structure, interacts with nop5. Component of box C/D small ribonucleoprotein (sRNP) particles that contain rpl7ae, FlpA and nop5, plus a guide RNA.

In terms of biological role, involved in pre-rRNA and tRNA processing. Utilizes the methyl donor S-adenosyl-L-methionine to catalyze the site-specific 2'-hydroxyl methylation of ribose moieties in rRNA and tRNA. Site specificity is provided by a guide RNA that base pairs with the substrate. Methylation occurs at a characteristic distance from the sequence involved in base pairing with the guide RNA. The polypeptide is Fibrillarin-like rRNA/tRNA 2'-O-methyltransferase (Methanosarcina mazei (Methanosarcina frisia)).